Consider the following 467-residue polypeptide: 3-isopropylmalate dehydratase large subunit (467 aa).

[4Fe-4S] cluster contacts are provided by Cys-347, Cys-407, and Cys-410.

This sequence belongs to the aconitase/IPM isomerase family. LeuC type 1 subfamily. Heterodimer of LeuC and LeuD. [4Fe-4S] cluster serves as cofactor.

It carries out the reaction (2R,3S)-3-isopropylmalate = (2S)-2-isopropylmalate. It functions in the pathway amino-acid biosynthesis; L-leucine biosynthesis; L-leucine from 3-methyl-2-oxobutanoate: step 2/4. In terms of biological role, catalyzes the isomerization between 2-isopropylmalate and 3-isopropylmalate, via the formation of 2-isopropylmaleate. This is 3-isopropylmalate dehydratase large subunit from Pelagibacter ubique (strain HTCC1062).